The sequence spans 460 residues: tRNA modification GTPase MnmE (460 aa).

Residues Arg29, Glu91, and Lys132 each coordinate (6S)-5-formyl-5,6,7,8-tetrahydrofolate. In terms of domain architecture, TrmE-type G spans 227–383; the sequence is GISIALIGKT…LIDTIIKKCG (157 aa). Residue Asn237 participates in K(+) binding. GTP-binding positions include 237 to 242, 256 to 262, and 281 to 284; these read NVGKSS, TNIPGTT, and DTAG. Position 241 (Ser241) interacts with Mg(2+). Positions 256, 258, and 261 each coordinate K(+). Thr262 lines the Mg(2+) pocket. Position 460 (Lys460) interacts with (6S)-5-formyl-5,6,7,8-tetrahydrofolate.

Belongs to the TRAFAC class TrmE-Era-EngA-EngB-Septin-like GTPase superfamily. TrmE GTPase family. In terms of assembly, homodimer. Heterotetramer of two MnmE and two MnmG subunits. The cofactor is K(+).

The protein localises to the cytoplasm. In terms of biological role, exhibits a very high intrinsic GTPase hydrolysis rate. Involved in the addition of a carboxymethylaminomethyl (cmnm) group at the wobble position (U34) of certain tRNAs, forming tRNA-cmnm(5)s(2)U34. The sequence is that of tRNA modification GTPase MnmE from Prochlorococcus marinus (strain MIT 9301).